The chain runs to 155 residues: MRRRKAPVREVLGDPIYNNKVVTKFINKMMLDGKKSVSEKIIYAAFDKIEEKSGEKGIEVFEKALERVKPLVEVRSRRVGGATYQVPVEVRPARQQSLSIRWLLEATRKRNERTMIERLASELVDAANERGAAFKKKEDVHKMAEANKAFAHYRW.

The protein belongs to the universal ribosomal protein uS7 family. In terms of assembly, part of the 30S ribosomal subunit. Contacts proteins S9 and S11.

In terms of biological role, one of the primary rRNA binding proteins, it binds directly to 16S rRNA where it nucleates assembly of the head domain of the 30S subunit. Is located at the subunit interface close to the decoding center, probably blocks exit of the E-site tRNA. The chain is Small ribosomal subunit protein uS7 from Helicobacter hepaticus (strain ATCC 51449 / 3B1).